Here is a 158-residue protein sequence, read N- to C-terminus: Transcription elongation factor GreA (158 aa).

The interval 41 to 61 (GDLSENAEYHAAKEDQSHNEG) is disordered. The stretch at 51–74 (AAKEDQSHNEGRIAELEDKLARAE) forms a coiled coil.

This sequence belongs to the GreA/GreB family.

Necessary for efficient RNA polymerase transcription elongation past template-encoded arresting sites. The arresting sites in DNA have the property of trapping a certain fraction of elongating RNA polymerases that pass through, resulting in locked ternary complexes. Cleavage of the nascent transcript by cleavage factors such as GreA or GreB allows the resumption of elongation from the new 3'terminus. GreA releases sequences of 2 to 3 nucleotides. The sequence is that of Transcription elongation factor GreA from Nitrobacter hamburgensis (strain DSM 10229 / NCIMB 13809 / X14).